The chain runs to 1693 residues: Putative stoned B-like protein (1693 aa).

Over residues 1–12 (MSWRDRDFDPHG) the composition is skewed to basic and acidic residues. Disordered stretches follow at residues 1–54 (MSWR…ELPA), 222–322 (NQIP…VEKS), 334–371 (TVEI…PTFS), 383–438 (KEMT…DPNA), 585–807 (GDYH…TSAA), 841–869 (KKME…DEED), and 899–1024 (PVKE…FVAD). A compositionally biased stretch (low complexity) spans 26 to 39 (SSSERAASMRAMRS). Basic and acidic residues-rich tracts occupy residues 279–301 (MEDK…KEET) and 311–322 (TTEKHQNEVEKS). Positions 360–371 (EEEEDDDLPTFS) are enriched in acidic residues. A compositionally biased stretch (basic and acidic residues) spans 393-412 (ENVENEKQEDTHISEGHVEY). Over residues 596–615 (DENSTSAISGYEQNGASTSL) the composition is skewed to polar residues. Positions 632–643 (YYQGQEYQQEYY) are enriched in low complexity. The short motif at 684-686 (DPF) is the DPF 1 element. Positions 708-722 (SPTPEASSSTGTSAP) are enriched in low complexity. Over residues 745-760 (PPRPPPAARPPPPRPA) the composition is skewed to pro residues. The span at 786–807 (KVSTAVKSTESTLKNLEETSAA) shows a compositional bias: polar residues. Residues 899–913 (PVKEIKKAPEIRRVD) show a composition bias toward basic and acidic residues. 3 short sequence motifs (DPF) span residues 1006 to 1008 (DPF), 1024 to 1026 (DPF), and 1039 to 1041 (DPF). The tract at residues 1062 to 1095 (ANAENEDDFYNGRQSPTLSTPTPEGGSPISQQRP) is disordered. A compositionally biased stretch (polar residues) spans 1073 to 1095 (GRQSPTLSTPTPEGGSPISQQRP). The SHD domain occupies 1136–1283 (GWDLMVRHPI…KCKITRTAKP (148 aa)). Positions 1287-1606 (QDEVQIHCYD…AKYQYKVEID (320 aa)) constitute an MHD domain. The interval 1633–1693 (ELHQPTFNPS…IQIDMKNYGY (61 aa)) is disordered. Residues 1637–1651 (PTFNPSTQESDTQQG) are compositionally biased toward polar residues.

This sequence belongs to the Stoned B family.

The protein resides in the cytoplasm. In terms of biological role, potential adapter protein, which may be involved in endocytic vesicle recycling of synaptic vesicles. The protein is Putative stoned B-like protein (unc-41) of Caenorhabditis elegans.